Consider the following 678-residue polypeptide: Zinc finger translocation-associated protein (678 aa).

Disordered regions lie at residues 1–100, 174–250, 333–413, and 493–583; these read MEPG…PGRD, GAGG…GSRG, LSEL…RDHR, and PESP…NYQP. Low complexity predominate over residues 66–78; the sequence is PSSRARGPASSGR. Basic and acidic residues predominate over residues 79–88; it reads KYSDHCEARA. Positions 187 to 200 are enriched in acidic residues; it reads AEEEEEEDEEEEEG. Residues 205–214 show a composition bias toward low complexity; that stretch reads ACPPKGSGKA. Lys375 is covalently cross-linked (Glycyl lysine isopeptide (Lys-Gly) (interchain with G-Cter in SUMO2)). The segment covering 493-509 has biased composition (low complexity); sequence PESPSVPVAPSTASASE. 2 stretches are compositionally biased toward acidic residues: residues 512-524 and 539-549; these read GGAE…EEWW and AEEEDDEDDSQ. The span at 557–572 shows a compositional bias: pro residues; it reads PPLPLPPPPPPPPPPP. Residues 573–583 show a composition bias toward basic and acidic residues; it reads RSREQRRNYQP.

This is Zinc finger translocation-associated protein from Mus musculus (Mouse).